The primary structure comprises 548 residues: Chaperonin GroEL 3 (548 aa).

ATP is bound by residues 30 to 33, Lys-51, 87 to 91, Gly-415, and Asp-496; these read TLGP and DGTTT.

This sequence belongs to the chaperonin (HSP60) family. As to quaternary structure, forms a cylinder of 14 subunits composed of two heptameric rings stacked back-to-back. Interacts with the co-chaperonin GroES.

The protein localises to the cytoplasm. The enzyme catalyses ATP + H2O + a folded polypeptide = ADP + phosphate + an unfolded polypeptide.. Together with its co-chaperonin GroES, plays an essential role in assisting protein folding. The GroEL-GroES system forms a nano-cage that allows encapsulation of the non-native substrate proteins and provides a physical environment optimized to promote and accelerate protein folding. The chain is Chaperonin GroEL 3 from Nitrobacter winogradskyi (strain ATCC 25391 / DSM 10237 / CIP 104748 / NCIMB 11846 / Nb-255).